Consider the following 218-residue polypeptide: Small ribosomal subunit protein uS3 (218 aa).

Residues 38 to 106 form the KH type-2 domain; it reads LRNDLKKKLM…PVHLNIEEVK (69 aa).

This sequence belongs to the universal ribosomal protein uS3 family. Part of the 30S ribosomal subunit. Forms a tight complex with proteins S10 and S14.

Binds the lower part of the 30S subunit head. Binds mRNA in the 70S ribosome, positioning it for translation. This Legionella pneumophila (strain Paris) protein is Small ribosomal subunit protein uS3.